Here is a 553-residue protein sequence, read N- to C-terminus: MSKDLNSSRIKIIKPNDSYIKVDRKKDLTKYELENGKVISTKDRPIASVPAITGKIPSDEEVFDSKTGLPNHSFLREHFFHEGRLSKEQAIKILNMSTVALSKEPNLLKLKAPITICGDIHGQYYDLLKLFEVGGDPAEIDYLFLGDYVDRGAFSFECLIYLYSLKLNNLGRFWMLRGNHECKHLTSYFTFKNEMLHKYDMEVYDACCRSFNVLPLAALMNGQYFCVHGGISPELKSVEDVNKINRFREIPSRGLMCDLLWADPVENYDDARDGSEFDQSEDEFVPNSLRGCSFAFTFKASCKFLKANGLLSIIRAHEAQDAGYRMYKNNKVTGFPSLITMFSAPNYLDTYHNKAAVLKYEENVMNIRQFHMSPHPYWLPDFMDVFTWSLPFVGEKVTSMLVSILNICSEQELDPESEPKAAEETVKARANATKETGTPSDEKASSAILEDETRRKALRNKILAIAKVSRMFSVLREESEKVEYLKTMNAGVLPRGALARGTEGLNETLSTFEKARKEDLINEKLPPSLSEVEQEKIKYYEKILKGAEKKPQL.

An N-acetylserine modification is found at S2. The Fe cation site is built by D119, H121, and D147. Positions 147 and 179 each coordinate Zn(2+). The Proton donor role is filled by H180. Zn(2+) is bound by residues H228 and H317. Residues 413 to 447 are disordered; that stretch reads LDPESEPKAAEETVKARANATKETGTPSDEKASSA. Residues 417-427 are compositionally biased toward basic and acidic residues; sequence SEPKAAEETVK.

The protein belongs to the PPP phosphatase family. PP-2B subfamily. As to quaternary structure, composed of two components (A and B), the A component is the catalytic subunit and the B component confers calcium sensitivity. It depends on Fe(3+) as a cofactor. Zn(2+) serves as cofactor.

The catalysed reaction is O-phospho-L-seryl-[protein] + H2O = L-seryl-[protein] + phosphate. It carries out the reaction O-phospho-L-threonyl-[protein] + H2O = L-threonyl-[protein] + phosphate. In terms of biological role, calcium-dependent, calmodulin-stimulated protein phosphatase. This subunit may have a role in the calmodulin activation of calcineurin. The protein is Serine/threonine-protein phosphatase 2B catalytic subunit A1 (CNA1) of Saccharomyces cerevisiae (strain ATCC 204508 / S288c) (Baker's yeast).